The chain runs to 1340 residues: Thioester-containing protein 1 allele S1 (1340 aa).

Residues 1–21 (MWQFIRSRILTVIIFIGAAHG) form the signal peptide. N-linked (GlcNAc...) asparagine glycosylation is found at Asn68, Asn199, Asn242, Asn312, and Asn481. Residues 580-609 (ENEFDIFHSLGLFARTLDDILFDSANEKTG) are may contain the cleavage site. 4 N-linked (GlcNAc...) asparagine glycosylation sites follow: Asn637, Asn728, Asn813, and Asn828. A cross-link (isoglutamyl cysteine thioester (Cys-Gln)) is located at residues 859–862 (CGEQ). 3 disulfides stabilise this stretch: Cys1217–Cys1283, Cys1326–Cys1338, and Cys1329–Cys1334.

Heterodimer of a TEP1-N chain and an TEP1-C chain non-covalently linked. Forms a complex composed of TEP1-N and TEP1-C heterodimer, LRIM1 and APL1C; the interaction stabilizes TEP1-N and TEP1-C heterodimer, prevents its binding to tissues while circulating in the hemolymph and protects the thioester bond from hydrolysis. Mature TEP1 and to a lesser extent full-length TEP1 interact with SPCLIP1; the interaction is induced by microbial infection. In terms of processing, in the hemolymph, the full-length protein is cleaved by an unknow protease into a 75kDa N-terminal (TEP1-N) chain and an 80kDa C-terminal (TEP1-C) chain which remain non-covalently linked. The TEP1-C chain contains the thioester bond which covalently binds to the pathogen surface. Cleavage is induced by bacterial infection or aseptic wound injury. During embryonic and pupal development, the cleaved form is the predominant form. Post-translationally, N-glycosylated. Specifically expressed in hemocytes (at protein level).

Its subcellular location is the secreted. In terms of biological role, plays an essential role in the innate immune response to bacteria and protozoa infection. After proteolytic cleavage, the protein C-terminus binds covalently through a thioester bond to the pathogen surface resulting in pathogen clearance either by melanization or lysis. Initiate the recruitment and activation of a cascade of proteases, mostly of CLIP-domain serine proteases, which leads to the proteolytic cleavage of the prophenoloxidase (PPO) into active phenoloxidase (PO), the rate-limiting enzyme in melanin biosynthesis. In response to parasite P.berghei-mediated infection, binds to and mediates killing of ookinetes, as they egress from midgut epithelial cells into the basal labyrinth, by both lysis and melanization. During bacterial infection, binds to both Gram-positive and Gram-negative bacteria but only promotes phagocytosis of Gram-negative bacteria. Promotes the accumulation of SPCLIP1 onto the surface of P.berghei ookinetes and bacterium E.coli which leads to the melanization of the pathogen. Recruits CLIPA2 to bacteria surface. In response to bacterial infection, required for periostial hemocyte aggregation, but not for the aggregation of sessile hemocytes in non-periostial regions. During the late stage of fungus B.bassiana-mediated infection, required for the initiation of hyphae melanization by binding to the surface of hyphae and recruiting prophenoloxidase PPO to them. Plays a role in male fertility by binding to defective sperm cells and promoting their removal during spermatogenesis. Binds covalently through a thioester bond to the pathogen surface resulting in pathogen clearance. The sequence is that of Thioester-containing protein 1 allele S1 from Anopheles gambiae (African malaria mosquito).